The primary structure comprises 192 residues: MTEYILLLIGTVLVNNFVLVKFLGLCPFMGVSKKLETAIGMGLATTFVLTMASVCAYLVESYILEPLHIEYLRTMSFILVIAVVVQFTEMVVHKTSPTLYRLLGIFLPLITTNCAVLGVALLNINENHSFVESIIYGFGAAVGFSLVLILFASMRERISAADVPAPFKGASIAMITAGLMSLAFMGFTGLVK.

6 helical membrane-spanning segments follow: residues isoleucine 5–leucine 25, isoleucine 39–valine 59, leucine 72–valine 92, leucine 102–leucine 122, isoleucine 134–methionine 154, and serine 171–valine 191.

The protein belongs to the NqrDE/RnfAE family. In terms of assembly, the complex is composed of six subunits: RnfA, RnfB, RnfC, RnfD, RnfE and RnfG.

It localises to the cell inner membrane. Its function is as follows. Part of a membrane-bound complex that couples electron transfer with translocation of ions across the membrane. The chain is Ion-translocating oxidoreductase complex subunit A from Vibrio vulnificus (strain CMCP6).